A 200-amino-acid chain; its full sequence is Membrane-spanning 4-domains subfamily A member 5 (200 aa).

The Cytoplasmic segment spans residues M1 to T52. The chain crosses the membrane as a helical span at residues I53–L73. The Extracellular portion of the chain corresponds to K74–P80. Residues F81 to F101 form a helical membrane-spanning segment. Topologically, residues L102 to M120 are cytoplasmic. The helical transmembrane segment at N121 to L141 threads the bilayer. The Extracellular segment spans residues D142–V159. The helical transmembrane segment at T160–I180 threads the bilayer. Topologically, residues S181–C200 are cytoplasmic.

It belongs to the MS4A family. As to expression, expressed at high level in the testis. Detected also in the pancreas, heart and in the brain.

It localises to the membrane. May be involved in signal transduction as a component of a multimeric receptor complex. The sequence is that of Membrane-spanning 4-domains subfamily A member 5 (MS4A5) from Homo sapiens (Human).